Here is a 931-residue protein sequence, read N- to C-terminus: Protein translocase subunit SecA (931 aa).

ATP contacts are provided by residues Q87, 105 to 109 (GEGKT), and D515. The Zn(2+) site is built by C915, C917, C926, and H927.

It belongs to the SecA family. Monomer and homodimer. Part of the essential Sec protein translocation apparatus which comprises SecA, SecYEG and auxiliary proteins SecDF-YajC and YidC. Zn(2+) is required as a cofactor.

Its subcellular location is the cell inner membrane. It is found in the cytoplasm. It catalyses the reaction ATP + H2O + cellular proteinSide 1 = ADP + phosphate + cellular proteinSide 2.. Its function is as follows. Part of the Sec protein translocase complex. Interacts with the SecYEG preprotein conducting channel. Has a central role in coupling the hydrolysis of ATP to the transfer of proteins into and across the cell membrane, serving both as a receptor for the preprotein-SecB complex and as an ATP-driven molecular motor driving the stepwise translocation of polypeptide chains across the membrane. This Burkholderia ambifaria (strain MC40-6) protein is Protein translocase subunit SecA.